We begin with the raw amino-acid sequence, 100 residues long: Large ribosomal subunit protein bL28 (100 aa).

It belongs to the bacterial ribosomal protein bL28 family.

In Methylobacterium radiotolerans (strain ATCC 27329 / DSM 1819 / JCM 2831 / NBRC 15690 / NCIMB 10815 / 0-1), this protein is Large ribosomal subunit protein bL28.